The primary structure comprises 98 residues: Small ribosomal subunit protein bS6 (98 aa).

The protein belongs to the bacterial ribosomal protein bS6 family.

Binds together with bS18 to 16S ribosomal RNA. In Staphylococcus carnosus (strain TM300), this protein is Small ribosomal subunit protein bS6.